Reading from the N-terminus, the 95-residue chain is UPF0358 protein BcerKBAB4_3775 (95 aa).

The protein belongs to the UPF0358 family.

In Bacillus mycoides (strain KBAB4) (Bacillus weihenstephanensis), this protein is UPF0358 protein BcerKBAB4_3775.